A 137-amino-acid polypeptide reads, in one-letter code: Nucleoside diphosphate kinase (137 aa).

Lys9, Phe57, Arg85, Thr91, Arg102, and Asn112 together coordinate ATP. The Pros-phosphohistidine intermediate role is filled by His115.

It belongs to the NDK family. As to quaternary structure, homotetramer. The cofactor is Mg(2+).

The protein resides in the cytoplasm. The catalysed reaction is a 2'-deoxyribonucleoside 5'-diphosphate + ATP = a 2'-deoxyribonucleoside 5'-triphosphate + ADP. The enzyme catalyses a ribonucleoside 5'-diphosphate + ATP = a ribonucleoside 5'-triphosphate + ADP. Major role in the synthesis of nucleoside triphosphates other than ATP. The ATP gamma phosphate is transferred to the NDP beta phosphate via a ping-pong mechanism, using a phosphorylated active-site intermediate. This Geobacter sulfurreducens (strain ATCC 51573 / DSM 12127 / PCA) protein is Nucleoside diphosphate kinase.